Consider the following 1161-residue polypeptide: PAN2-PAN3 deadenylation complex catalytic subunit pan2 (1161 aa).

3 WD repeats span residues 20-59, 102-145, and 276-315; these read GLPT…RYTS, AHEE…DKLQ, and ANVS…HFNE. The tract at residues 316–452 is linker; that stretch reads MSKEVEFADV…GAKLNGEAED (137 aa). The region spanning 453–822 is the USP domain; the sequence is DPLLKYSNVE…IPCVLAYQAR (370 aa). The Exonuclease domain occupies 871–1049; sequence VALDTEFVDL…VEDARMALRL (179 aa). D874, E876, D983, and D1042 together coordinate a divalent metal cation. The disordered stretch occupies residues 1094 to 1161; the sequence is GTAVTMQNNS…GDFFGGSPLK (68 aa). Residues 1097-1110 are compositionally biased toward polar residues; it reads VTMQNNSGRNTPST. A compositionally biased stretch (low complexity) spans 1116-1129; sequence AAAAAATTSAPATP. Residues 1145 to 1155 are compositionally biased toward gly residues; sequence TFGGPGTGDFF.

The protein belongs to the peptidase C19 family. PAN2 subfamily. Forms a heterotrimer with an asymmetric homodimer of the regulatory subunit pan3 to form the poly(A)-nuclease (PAN) deadenylation complex. It depends on a divalent metal cation as a cofactor.

The protein resides in the cytoplasm. The enzyme catalyses Exonucleolytic cleavage of poly(A) to 5'-AMP.. With respect to regulation, positively regulated by the regulatory subunit pan3. In terms of biological role, catalytic subunit of the poly(A)-nuclease (PAN) deadenylation complex, one of two cytoplasmic mRNA deadenylases involved in mRNA turnover. PAN specifically shortens poly(A) tails of RNA and the activity is stimulated by poly(A)-binding protein pab1. PAN deadenylation is followed by rapid degradation of the shortened mRNA tails by the CCR4-NOT complex. Deadenylated mRNAs are then degraded by two alternative mechanisms, namely exosome-mediated 3'-5' exonucleolytic degradation, or deadenylation-dependent mRNA decaping and subsequent 5'-3' exonucleolytic degradation by xrn1. May also be involved in post-transcriptional maturation of mRNA poly(A) tails. The chain is PAN2-PAN3 deadenylation complex catalytic subunit pan2 from Aspergillus clavatus (strain ATCC 1007 / CBS 513.65 / DSM 816 / NCTC 3887 / NRRL 1 / QM 1276 / 107).